Consider the following 75-residue polypeptide: UPF0346 protein LGAS_0911 (75 aa).

This sequence belongs to the UPF0346 family.

The chain is UPF0346 protein LGAS_0911 from Lactobacillus gasseri (strain ATCC 33323 / DSM 20243 / BCRC 14619 / CIP 102991 / JCM 1131 / KCTC 3163 / NCIMB 11718 / NCTC 13722 / AM63).